The following is a 185-amino-acid chain: Ribosome-recycling factor (185 aa).

Positions 137–159 (EDLKADEKAKDISEDDRKRMEDE) are disordered.

Belongs to the RRF family.

It is found in the cytoplasm. In terms of biological role, responsible for the release of ribosomes from messenger RNA at the termination of protein biosynthesis. May increase the efficiency of translation by recycling ribosomes from one round of translation to another. This chain is Ribosome-recycling factor, found in Erythrobacter litoralis (strain HTCC2594).